The sequence spans 273 residues: Beta-lactamase OXA-133 (273 aa).

The first 17 residues, 1 to 17 (MNKYFTCYVVASLFFSG), serve as a signal peptide directing secretion. Cys18 is lipidated: N-palmitoyl cysteine. Cys18 is lipidated: S-diacylglycerol cysteine. Residue Ser79 is the Acyl-ester intermediate of the active site. Lys82 is subject to N6-carboxylysine. 216-218 (KTG) is a binding site for substrate.

The protein belongs to the class-D beta-lactamase family.

It is found in the cell membrane. It catalyses the reaction a beta-lactam + H2O = a substituted beta-amino acid. Catalyzes the hydrolysis of beta-lactam antibiotics. The chain is Beta-lactamase OXA-133 from Acinetobacter radioresistens.